The sequence spans 156 residues: Small ribosomal subunit protein uS7 (156 aa).

It belongs to the universal ribosomal protein uS7 family. Part of the 30S ribosomal subunit. Contacts proteins S9 and S11.

Functionally, one of the primary rRNA binding proteins, it binds directly to 16S rRNA where it nucleates assembly of the head domain of the 30S subunit. Is located at the subunit interface close to the decoding center, probably blocks exit of the E-site tRNA. The protein is Small ribosomal subunit protein uS7 of Streptococcus gordonii (strain Challis / ATCC 35105 / BCRC 15272 / CH1 / DL1 / V288).